Reading from the N-terminus, the 238-residue chain is MIMNKTTLLHEGKAKKVFLTDDADLVIQEFKDDATAFNNKKKGSIADKGVVNNAISCRLFTMLEEHGVNTHLVEKLSDRDMLCRRLDIIKVEVVVRNIAAGSLVRRYGFTEGTVLARPIVEFYLKDDDLDDPLMIAEHAVALGVATMDELEVLKSRAGAINDVLKKFFADRRLKLVDFKLEFGRHKGEILLGDEISPDTCRFWDLDTDEKMDKDRFRFDLGGVEDAYTEVQRRVLELD.

Belongs to the SAICAR synthetase family.

It catalyses the reaction 5-amino-1-(5-phospho-D-ribosyl)imidazole-4-carboxylate + L-aspartate + ATP = (2S)-2-[5-amino-1-(5-phospho-beta-D-ribosyl)imidazole-4-carboxamido]succinate + ADP + phosphate + 2 H(+). Its pathway is purine metabolism; IMP biosynthesis via de novo pathway; 5-amino-1-(5-phospho-D-ribosyl)imidazole-4-carboxamide from 5-amino-1-(5-phospho-D-ribosyl)imidazole-4-carboxylate: step 1/2. This is Phosphoribosylaminoimidazole-succinocarboxamide synthase from Chlorobium phaeovibrioides (strain DSM 265 / 1930) (Prosthecochloris vibrioformis (strain DSM 265)).